The sequence spans 126 residues: Glycine cleavage system H protein (126 aa).

In terms of domain architecture, Lipoyl-binding spans 22–103 (KAYIGITDYA…PYGSWMALVE (82 aa)). An N6-lipoyllysine modification is found at lysine 63.

Belongs to the GcvH family. As to quaternary structure, the glycine cleavage system is composed of four proteins: P, T, L and H. (R)-lipoate serves as cofactor.

Its function is as follows. The glycine cleavage system catalyzes the degradation of glycine. The H protein shuttles the methylamine group of glycine from the P protein to the T protein. This is Glycine cleavage system H protein from Thermoanaerobacter pseudethanolicus (strain ATCC 33223 / 39E) (Clostridium thermohydrosulfuricum).